Reading from the N-terminus, the 40-residue chain is Photosystem II reaction center protein J (40 aa).

A helical transmembrane segment spans residues 8 to 28 (IPLWVIGTVAGIPVIGLIGIF).

It belongs to the PsbJ family. As to quaternary structure, PSII is composed of 1 copy each of membrane proteins PsbA, PsbB, PsbC, PsbD, PsbE, PsbF, PsbH, PsbI, PsbJ, PsbK, PsbL, PsbM, PsbT, PsbX, PsbY, PsbZ, Psb30/Ycf12, at least 3 peripheral proteins of the oxygen-evolving complex and a large number of cofactors. It forms dimeric complexes.

It localises to the plastid. Its subcellular location is the chloroplast thylakoid membrane. Its function is as follows. One of the components of the core complex of photosystem II (PSII). PSII is a light-driven water:plastoquinone oxidoreductase that uses light energy to abstract electrons from H(2)O, generating O(2) and a proton gradient subsequently used for ATP formation. It consists of a core antenna complex that captures photons, and an electron transfer chain that converts photonic excitation into a charge separation. This chain is Photosystem II reaction center protein J, found in Nasturtium officinale (Watercress).